The primary structure comprises 477 residues: Salivary plasminogen activator alpha 2 (477 aa).

The first 36 residues, 1-36 (MVNTMKTKLLCVLLLCGAVFSLPRQETYRQLARGSR), serve as a signal peptide directing secretion. The region spanning 40-82 (VACRDEKTQMIYQQQESWLRPEVRSKRVEHCRCDRGLAQCHTV) is the Fibronectin type-I domain. Cystine bridges form between Cys-42-Cys-72, Cys-70-Cys-79, Cys-87-Cys-98, Cys-92-Cys-109, Cys-111-Cys-120, Cys-128-Cys-209, Cys-149-Cys-191, Cys-180-Cys-204, Cys-214-Cys-345, Cys-257-Cys-273, Cys-265-Cys-334, Cys-359-Cys-434, Cys-391-Cys-407, and Cys-424-Cys-452. Residues 83–121 (PVKSCSELRCFNGGTCWQAASFSDFVCQCPKGYTGKQCE) enclose the EGF-like domain. In terms of domain architecture, Kringle spans 128–209 (CYKDQGVTYR…ILEFCSVPVC (82 aa)). Asn-185 is a glycosylation site (N-linked (GlcNAc...) asparagine). One can recognise a Peptidase S1 domain in the interval 226 to 476 (STGGLFTDIT…YLGWIRDNMR (251 aa)). Active-site charge relay system residues include His-272 and Asp-321. A glycan (N-linked (GlcNAc...) asparagine) is linked at Asn-398. The Charge relay system role is filled by Ser-428.

This sequence belongs to the peptidase S1 family. In terms of assembly, monomer.

The protein localises to the secreted. It carries out the reaction Specific cleavage of Arg-|-Val bond in plasminogen to form plasmin.. With respect to regulation, activity toward plasminogen is stimulated in the presence of fibrin I. Functionally, probably essential to support the feeding habits of this exclusively haematophagous animal. Probable potent thrombolytic agent. This is Salivary plasminogen activator alpha 2 from Desmodus rotundus (Vampire bat).